The sequence spans 587 residues: Aspartate--tRNA ligase (587 aa).

Residue glutamate 174 coordinates L-aspartate. Residues glutamine 198 to lysine 201 are aspartate. Residue arginine 220 coordinates L-aspartate. Residues arginine 220–glutamate 222 and glutamine 229 contribute to the ATP site. An L-aspartate-binding site is contributed by histidine 443. Glutamate 477 provides a ligand contact to ATP. Arginine 484 contributes to the L-aspartate binding site. Glycine 529–arginine 532 contacts ATP.

It belongs to the class-II aminoacyl-tRNA synthetase family. Type 1 subfamily. In terms of assembly, homodimer.

It is found in the cytoplasm. It catalyses the reaction tRNA(Asp) + L-aspartate + ATP = L-aspartyl-tRNA(Asp) + AMP + diphosphate. Its function is as follows. Catalyzes the attachment of L-aspartate to tRNA(Asp) in a two-step reaction: L-aspartate is first activated by ATP to form Asp-AMP and then transferred to the acceptor end of tRNA(Asp). The chain is Aspartate--tRNA ligase from Streptococcus pneumoniae serotype 19F (strain G54).